The primary structure comprises 606 residues: Pickpocket protein 28 (606 aa).

The disordered stretch occupies residues 1–26; sequence MRTLTESRRRQSGSSGCKKDSESDDD. Helical transmembrane passes span 66–86 and 490–510; these read IFFG…ISNV and GLLG…FFYI.

It belongs to the amiloride-sensitive sodium channel (TC 1.A.6) family. As to expression, expressed in water-sensing neurons in taste bristles on the proboscis but not in carbonation-sensing taste peg neurons (at protein level). Expressed in the tracheal system.

It is found in the cell membrane. Osmosensitive ion channel that mediates the cellular and behavioral response to water. Plays an essential role in gustatory water reception. Part of a complex that plays a role in tracheal liquid clearance. Probable role in sodium transport. This chain is Pickpocket protein 28 (ppk28), found in Drosophila melanogaster (Fruit fly).